We begin with the raw amino-acid sequence, 780 residues long: ATPase family gene 2 protein (780 aa).

The span at 1–23 (MAPKSSSSGSKKKSSASSNSADA) shows a compositional bias: low complexity. The disordered stretch occupies residues 1–26 (MAPKSSSSGSKKKSSASSNSADAKAS). ATP is bound by residues 286 to 293 (GPPGTGKT) and 557 to 564 (GPPGCSKT).

The protein belongs to the AAA ATPase family. AFG2 subfamily. As to quaternary structure, homohexamer; ATP binding induces oligomerization. Forms a ring-shaped particle of about 12 nm diameter, that displays 6-fold radial symmetry. Associates with cytoplasmic pre-60S ribosomal particles containing ARX1, ALB1, RLP24 and NOG1. Binds to pre-60S ribosomal particles soon after their export from the nucleus and is released before REI1 and LSG1 are incorporated into the particles. Hexameric form interacts with RLP24 (via C-terminal); the interaction recruits AFG2 to pre-60S ribosomal particles and promotes AFG2 ATPase activity and RLP24 release from pre-60S ribosomal particles. Interacts (via N-terminus) with nucleoporin NUP116 (via N-terminus); the interaction is required for RLP24 release from pre-60S ribosomal particles.

It is found in the cytoplasm. It carries out the reaction ATP + H2O = ADP + phosphate + H(+). With respect to regulation, the hexamer is activated by RLP24 during pre-60S ribosomal particle maturation; RLP24 activates ATPase activity of both ATP-binding regions and increases cooperativity between AFG2 subunits. The second ATP-binding region is inhibited by diazaborine; the inhibition requires prior ATP binding specifically to the second ATP-binding region. Its function is as follows. ATP-dependent chaperone which uses the energy provided by ATP hydrolysis to generate mechanical force to disassemble protein complexes. Plays an essential role in the cytoplasmic maturation steps of pre-60S ribosomal particles by promoting the release of shuttling protein RLP24 from the pre-ribosomal particles. This step facilitates the subsequent release of other shuttling proteins such as NOG1 and allows the transition of the pre-ribosomal particles to later maturation forms that bind REI1. Essential for viability. This Saccharomyces cerevisiae (strain ATCC 204508 / S288c) (Baker's yeast) protein is ATPase family gene 2 protein.